Reading from the N-terminus, the 368-residue chain is Putative transport protein bbp_117 (368 aa).

8 helical membrane-spanning segments follow: residues 13 to 35 (VIFSLVFIFIMIISSLWIMRPFF), 39 to 61 (AWASMVVVATWPIFLKLQILLWG), 68 to 90 (VMMTFSLLLVFIIPIVCLVNSLI), 159 to 181 (HFGRFILHLIFMLIFSALLYWNG), 216 to 238 (LGVVVTALVQGILSGIGLAISGI), 248 to 270 (IIIFCLVQLGPLPVLIPAIIWLY), 277 to 299 (WGTVLLIWSCVVCILDHILRPIL), and 314 to 336 (GVIGGLIAFGMIGLFIGPVVLII).

The protein belongs to the autoinducer-2 exporter (AI-2E) (TC 2.A.86) family.

Its subcellular location is the cell membrane. The polypeptide is Putative transport protein bbp_117 (Buchnera aphidicola subsp. Baizongia pistaciae (strain Bp)).